We begin with the raw amino-acid sequence, 216 residues long: Dimethylamine corrinoid protein 2 (216 aa).

Positions 1–91 constitute a B12-binding N-terminal domain; it reads MASKEELLQE…EMPAGTETKK (91 aa). One can recognise a B12-binding domain in the interval 92–216; that stretch reads LGVIVNGTVE…AKAKELLLGK (125 aa). His-105 provides a ligand contact to methylcob(III)alamin.

This sequence belongs to the methylamine corrinoid protein family.

It functions in the pathway one-carbon metabolism; methanogenesis from dimethylamine. In terms of biological role, acts as a methyl group carrier between MtbB and MtbA. The sequence is that of Dimethylamine corrinoid protein 2 (mtbC2) from Methanosarcina acetivorans (strain ATCC 35395 / DSM 2834 / JCM 12185 / C2A).